Here is a 367-residue protein sequence, read N- to C-terminus: Peptide chain release factor 1 (367 aa).

Glutamine 243 is modified (N5-methylglutamine).

The protein belongs to the prokaryotic/mitochondrial release factor family. Post-translationally, methylated by PrmC. Methylation increases the termination efficiency of RF1.

The protein localises to the cytoplasm. In terms of biological role, peptide chain release factor 1 directs the termination of translation in response to the peptide chain termination codons UAG and UAA. This chain is Peptide chain release factor 1, found in Acidovorax sp. (strain JS42).